The chain runs to 447 residues: Protein disulfide-isomerase like 2-2 (447 aa).

The N-terminal stretch at 1–26 is a signal peptide; that stretch reads MERKMYKSTVFPICCLLFALFDRGNA. 2 consecutive Thioredoxin domains span residues 27 to 139 and 161 to 275; these read LYGS…QIKA and KKKS…QLES. Residues Cys62 and Cys65 each act as nucleophile in the active site. Cysteines 62 and 65 form a disulfide. The tract at residues 146-170 is disordered; sequence DGKTSGTKNGGGSSEKKKSEPSASV. N-linked (GlcNAc...) asparagine glycosylation is present at Asn173. Active-site nucleophile residues include Cys197 and Cys200. The cysteines at positions 197 and 200 are disulfide-linked. Residues 444-447 carry the Prevents secretion from ER motif; it reads KDDL.

Belongs to the protein disulfide isomerase family. In terms of tissue distribution, widely expressed.

Its subcellular location is the endoplasmic reticulum lumen. The catalysed reaction is Catalyzes the rearrangement of -S-S- bonds in proteins.. Acts as a protein-folding catalyst that interacts with nascent polypeptides to catalyze the formation, isomerization, and reduction or oxidation of disulfide bonds. The polypeptide is Protein disulfide-isomerase like 2-2 (PDIL2-2) (Arabidopsis thaliana (Mouse-ear cress)).